The primary structure comprises 270 residues: MAKVPDLFEDLKNCYSENEEYSSEIDHLTLNQKSFYDASYDPLHEDCTDKFMSPSTSETSKTPQLTLKKSVVMVAANGKILKKRRLSLNQFLTADDLEAIANEVEEEIMKPRSVAPNFYSSEKYNYQKIIKSQFILNDNLSQSVIRKAGGKYLAAAALQNLDDAVKFDMGAYTSKEDSKLPVTLRISKTRLFVSAQNEDEPVLLKEMPETPKTIRDETNLLFFWERHGSKNYFKSVAHPKLFIATQEEQLVHMARGLPSVTDFQILETQS.

A propeptide spanning residues 1 to 112 (MAKVPDLFED…EVEEEIMKPR (112 aa)) is cleaved from the precursor. The residue at position 82 (K82) is an N6-acetyllysine. The segment at 82–86 (KKRRL) is nuclear localization signal (NLS). At S87 the chain carries Phosphoserine. N-linked (GlcNAc...) asparagine glycosylation is present at N139.

This sequence belongs to the IL-1 family. In terms of assembly, monomer. Interacts with TMED10; the interaction mediates the translocation from the cytoplasm into the ERGIC (endoplasmic reticulum-Golgi intermediate compartment) and thereby secretion. Interacts with IL1R1. Interacts with S100A13; this interaction is the first step in the export of IL1A, followed by direct translocation of this complex across the plasma membrane. In terms of processing, acetylated within its nuclear localization sequence, which impacts subcellular localization. Post-translationally, proteolytic processed by CAPN1 in a calcium-dependent manner. Cleavage from 31 kDa precursor to 18 kDa biologically active molecules. Phosphorylated. Phosphorylation greatly enhances susceptibility to digestion and promotes the conversion of pre-IL1A alpha to the biologically active IL1A.

It is found in the nucleus. The protein resides in the cytoplasm. It localises to the secreted. Functionally, cytokine constitutively present intracellularly in nearly all resting non-hematopoietic cells that plays an important role in inflammation and bridges the innate and adaptive immune systems. After binding to its receptor IL1R1 together with its accessory protein IL1RAP, forms the high affinity interleukin-1 receptor complex. Signaling involves the recruitment of adapter molecules such as MYD88, IRAK1 or IRAK4. In turn, mediates the activation of NF-kappa-B and the three MAPK pathways p38, p42/p44 and JNK pathways. Within the cell, acts as an alarmin and cell death results in its liberation in the extracellular space after disruption of the cell membrane to induce inflammation and alert the host to injury or damage. In addition to its role as a danger signal, which occurs when the cytokine is passively released by cell necrosis, directly senses DNA damage and acts as signal for genotoxic stress without loss of cell integrity. The chain is Interleukin-1 alpha (IL1A) from Felis catus (Cat).